We begin with the raw amino-acid sequence, 166 residues long: Telethonin (166 aa).

Phosphoserine is present on serine 39. Residues 145-166 (VSKPGTLRRSLSRSMSQEAQRG) are disordered. Polar residues predominate over residues 156-166 (SRSMSQEAQRG).

As to quaternary structure, interacts with MYOZ1, MYOZ2 and MYOZ3. Interacts with CSRP3. Interacts directly with the N-terminal Ig-like domains of 2 titin (TTN) molecules. Interacts with ANKRD2; the interaction is direct.

It localises to the cytoplasm. The protein localises to the myofibril. Its subcellular location is the sarcomere. Its function is as follows. Muscle assembly regulating factor. Mediates the antiparallel assembly of titin (TTN) molecules at the sarcomeric Z-disk. The protein is Telethonin (TCAP) of Bos taurus (Bovine).